Consider the following 63-residue polypeptide: Defensin-like protein 278 (63 aa).

Residues 1-15 form the signal peptide; the sequence is MSLVYMYMYIGVVMS. 3 cysteine pairs are disulfide-bonded: C31-C48, C37-C53, and C41-C55.

It belongs to the DEFL family.

It is found in the secreted. The chain is Defensin-like protein 278 from Arabidopsis thaliana (Mouse-ear cress).